The sequence spans 396 residues: 1-deoxy-D-xylulose 5-phosphate reductoisomerase (396 aa).

The NADPH site is built by Thr-13, Gly-14, Ser-15, Ile-16, and Asn-127. A 1-deoxy-D-xylulose 5-phosphate-binding site is contributed by Lys-128. Residue Glu-129 coordinates NADPH. Asp-153 lines the Mn(2+) pocket. 1-deoxy-D-xylulose 5-phosphate contacts are provided by Ser-154, Glu-155, Ser-184, and His-207. Position 155 (Glu-155) interacts with Mn(2+). Gly-213 contacts NADPH. 1-deoxy-D-xylulose 5-phosphate contacts are provided by Ser-220, Asn-225, Lys-226, and Glu-229. Glu-229 is a Mn(2+) binding site.

This sequence belongs to the DXR family. The cofactor is Mg(2+). Mn(2+) serves as cofactor.

It catalyses the reaction 2-C-methyl-D-erythritol 4-phosphate + NADP(+) = 1-deoxy-D-xylulose 5-phosphate + NADPH + H(+). Its pathway is isoprenoid biosynthesis; isopentenyl diphosphate biosynthesis via DXP pathway; isopentenyl diphosphate from 1-deoxy-D-xylulose 5-phosphate: step 1/6. Its function is as follows. Catalyzes the NADPH-dependent rearrangement and reduction of 1-deoxy-D-xylulose-5-phosphate (DXP) to 2-C-methyl-D-erythritol 4-phosphate (MEP). The polypeptide is 1-deoxy-D-xylulose 5-phosphate reductoisomerase (Pseudomonas fluorescens (strain ATCC BAA-477 / NRRL B-23932 / Pf-5)).